The chain runs to 95 residues: Aspartyl/glutamyl-tRNA(Asn/Gln) amidotransferase subunit C (95 aa).

The protein belongs to the GatC family. In terms of assembly, heterotrimer of A, B and C subunits.

The catalysed reaction is L-glutamyl-tRNA(Gln) + L-glutamine + ATP + H2O = L-glutaminyl-tRNA(Gln) + L-glutamate + ADP + phosphate + H(+). It catalyses the reaction L-aspartyl-tRNA(Asn) + L-glutamine + ATP + H2O = L-asparaginyl-tRNA(Asn) + L-glutamate + ADP + phosphate + 2 H(+). In terms of biological role, allows the formation of correctly charged Asn-tRNA(Asn) or Gln-tRNA(Gln) through the transamidation of misacylated Asp-tRNA(Asn) or Glu-tRNA(Gln) in organisms which lack either or both of asparaginyl-tRNA or glutaminyl-tRNA synthetases. The reaction takes place in the presence of glutamine and ATP through an activated phospho-Asp-tRNA(Asn) or phospho-Glu-tRNA(Gln). This chain is Aspartyl/glutamyl-tRNA(Asn/Gln) amidotransferase subunit C, found in Chlorobaculum parvum (strain DSM 263 / NCIMB 8327) (Chlorobium vibrioforme subsp. thiosulfatophilum).